The chain runs to 73 residues: UPF0154 protein BcerKBAB4_3367 (73 aa).

Residues W4–I24 traverse the membrane as a helical segment.

Belongs to the UPF0154 family.

It localises to the cell membrane. This is UPF0154 protein BcerKBAB4_3367 from Bacillus mycoides (strain KBAB4) (Bacillus weihenstephanensis).